The sequence spans 267 residues: Very long chain fatty acid elongase 6 (267 aa).

A glycan (N-linked (GlcNAc...) asparagine) is linked at N2. 7 helical membrane passes run 34–51, 70–90, 111–131, 136–156, 159–179, 197–217, and 234–254; these read FLFS…RHLM, LAVF…YILM, FWAY…IFII, KLIF…WYSY, MVAG…VMYS, FITL…YLVF, and IFWS…FFFE.

This sequence belongs to the ELO family. ELOVL6 subfamily. Post-translationally, N-Glycosylated. In terms of tissue distribution, expressed in liver and barely in brain.

Its subcellular location is the endoplasmic reticulum membrane. The enzyme catalyses a very-long-chain acyl-CoA + malonyl-CoA + H(+) = a very-long-chain 3-oxoacyl-CoA + CO2 + CoA. The catalysed reaction is hexadecanoyl-CoA + malonyl-CoA + H(+) = 3-oxooctadecanoyl-CoA + CO2 + CoA. It catalyses the reaction (9Z)-hexadecenoyl-CoA + malonyl-CoA + H(+) = 3-oxo-(11Z)-octadecenoyl-CoA + CO2 + CoA. It carries out the reaction dodecanoyl-CoA + malonyl-CoA + H(+) = 3-oxotetradecanoyl-CoA + CO2 + CoA. The enzyme catalyses tetradecanoyl-CoA + malonyl-CoA + H(+) = 3-oxohexadecanoyl-CoA + CO2 + CoA. The catalysed reaction is (9Z)-octadecenoyl-CoA + malonyl-CoA + H(+) = 3-oxo-(11Z)-eicosenoyl-CoA + CO2 + CoA. It catalyses the reaction (9Z,12Z)-octadecadienoyl-CoA + malonyl-CoA + H(+) = (11Z,14Z)-3-oxoicosa-11,14-dienoyl-CoA + CO2 + CoA. It carries out the reaction (9Z,12Z,15Z)-octadecatrienoyl-CoA + malonyl-CoA + H(+) = (11Z,14Z,17Z)-3-oxoeicosatrienoyl-CoA + CO2 + CoA. It functions in the pathway lipid metabolism; fatty acid biosynthesis. With respect to regulation, the reaction is stimulated by the presence of HSD17B12, the enzyme catalyzing the second step of the elongation cycle. Catalyzes the first and rate-limiting reaction of the four reactions that constitute the long-chain fatty acids elongation cycle. This endoplasmic reticulum-bound enzymatic process allows the addition of 2 carbons to the chain of long- and very long-chain fatty acids (VLCFAs) per cycle. Condensing enzyme that elongates fatty acids with 12, 14 and 16 carbons with higher activity toward C16:0 acyl-CoAs. Catalyzes the synthesis of unsaturated C16 long chain fatty acids and, to a lesser extent, C18:0 and those with low desaturation degree. May participate in the production of saturated and monounsaturated VLCFAs of different chain lengths that are involved in multiple biological processes as precursors of membrane lipids and lipid mediators. This Rattus norvegicus (Rat) protein is Very long chain fatty acid elongase 6.